The chain runs to 370 residues: tRNA pseudouridine synthase D (370 aa).

The active-site Nucleophile is the D77. Residues 152–297 (GVPNYFGEQR…LEQERRPLLL (146 aa)) enclose the TRUD domain.

This sequence belongs to the pseudouridine synthase TruD family.

It catalyses the reaction uridine(13) in tRNA = pseudouridine(13) in tRNA. Its function is as follows. Responsible for synthesis of pseudouridine from uracil-13 in transfer RNAs. This Shewanella oneidensis (strain ATCC 700550 / JCM 31522 / CIP 106686 / LMG 19005 / NCIMB 14063 / MR-1) protein is tRNA pseudouridine synthase D.